The primary structure comprises 972 residues: DNA cross-link repair 1A protein (972 aa).

The segment at 14-80 is disordered; the sequence is YKSIRKRKPQ…SEDLDPCKDD (67 aa). The segment covering 23 to 37 has biased composition (polar residues); it reads QSNPDSTSVSMQTVT. The span at 39-54 shows a compositional bias: basic residues; sequence GKCRPKRKGSGNRKKS. The span at 64–80 shows a compositional bias: basic and acidic residues; the sequence is SEQRLRPSEDLDPCKDD. The segment at 105–135 adopts a UBZ4-type zinc-finger fold; sequence DGYCPSCQMPFSLLVVQTPRWHVAECLDTPG. Positions 108, 111, 126, and 130 each coordinate Zn(2+). Disordered stretches follow at residues 191-219 and 552-623; these read KSSC…NNEC and GEAC…TTDE. Positions 210 to 219 are enriched in polar residues; it reads NLKNVPNNEC.

It belongs to the DNA repair metallo-beta-lactamase (DRMBL) family. As to quaternary structure, binds PIAS1.

Its subcellular location is the nucleus. The enzyme catalyses a beta-lactam + H2O = a substituted beta-amino acid. Its function is as follows. May be required for DNA interstrand cross-link repair. This is DNA cross-link repair 1A protein (DCLRE1A) from Gallus gallus (Chicken).